Here is a 483-residue protein sequence, read N- to C-terminus: Proline--tRNA ligase (483 aa).

Belongs to the class-II aminoacyl-tRNA synthetase family. ProS type 3 subfamily. In terms of assembly, homodimer.

It localises to the cytoplasm. It carries out the reaction tRNA(Pro) + L-proline + ATP = L-prolyl-tRNA(Pro) + AMP + diphosphate. Its function is as follows. Catalyzes the attachment of proline to tRNA(Pro) in a two-step reaction: proline is first activated by ATP to form Pro-AMP and then transferred to the acceptor end of tRNA(Pro). The sequence is that of Proline--tRNA ligase from Sulfolobus acidocaldarius (strain ATCC 33909 / DSM 639 / JCM 8929 / NBRC 15157 / NCIMB 11770).